A 437-amino-acid polypeptide reads, in one-letter code: F-box only protein 9 (437 aa).

The interval 1–26 (MSAEAEEDCHSDADRVGDEGNESPAE) is disordered. N-acetylalanine is present on S2. Over residues 8–26 (DCHSDADRVGDEGNESPAE) the composition is skewed to basic and acidic residues. H10 bears the Phosphoserine mark. The stretch at 84–117 (ARELFLQAVEEEQNGALYEAIKFYRRAMQLVPDI) is one TPR repeat. S126 carries the phosphoserine modification. The region spanning 175 to 226 (QTHISVLPMEVLMYIFRWVVSSDLDLRSLEQLSLVCRGFYICARDPEIWRLA) is the F-box domain.

Part of the SCF (SKP1-CUL1-F-box) E3 ubiquitin-protein ligase complex SCF(FBXO9) composed of CUL1, SKP1, RBX1 and FBXO9. Interacts with TTI1 and TELO2; when TTI1 and TELO2 are phosphorylated by CK2.

The protein resides in the cytoplasm. It participates in protein modification; protein ubiquitination. Substrate recognition component of a SCF (SKP1-CUL1-F-box protein) E3 ubiquitin-protein ligase complex which mediates the ubiquitination and subsequent proteasomal degradation of target proteins and plays a role in several biological processes such as cell cycle, cell proliferation, or maintenance of chromosome stability. Ubiquitinates mTORC1-bound TTI1 and TELO2 when they are phosphorylated by CK2 following growth factor deprivation, leading to their degradation. In contrast, does not mediate ubiquitination of TTI1 and TELO2 when they are part of the mTORC2 complex. As a consequence, mTORC1 is inactivated to restrain cell growth and protein translation, while mTORC2 is the activated due to the relief of feedback inhibition by mTORC1. Plays a role in maintaining epithelial cell survival by regulating the turn-over of chromatin modulator PRMT4 through ubiquitination and degradation by the proteasomal pathway. Also regulates PPARgamma stability by facilitating PPARgamma/PPARG ubiquitination and thereby plays a role in adipocyte differentiation. The sequence is that of F-box only protein 9 (Fbxo9) from Mus musculus (Mouse).